The chain runs to 609 residues: UvrABC system protein C (609 aa).

Positions 19–97 (ASPGCYLWKS…IKKHNPRFNV (79 aa)) constitute a GIY-YIG domain. One can recognise a UVR domain in the interval 208-243 (ESLVSDLNIKMSNASERLDFEKAARYRDMLQRIQNF).

This sequence belongs to the UvrC family. As to quaternary structure, interacts with UvrB in an incision complex.

It is found in the cytoplasm. Its function is as follows. The UvrABC repair system catalyzes the recognition and processing of DNA lesions. UvrC both incises the 5' and 3' sides of the lesion. The N-terminal half is responsible for the 3' incision and the C-terminal half is responsible for the 5' incision. This Leptospira interrogans serogroup Icterohaemorrhagiae serovar Lai (strain 56601) protein is UvrABC system protein C.